The chain runs to 361 residues: tRNA/tmRNA (uracil-C(5))-methyltransferase (361 aa).

S-adenosyl-L-methionine-binding residues include glutamine 185, tyrosine 213, asparagine 218, glutamate 234, and aspartate 294. Cysteine 319 acts as the Nucleophile in catalysis. Residue glutamate 353 is the Proton acceptor of the active site.

Belongs to the class I-like SAM-binding methyltransferase superfamily. RNA M5U methyltransferase family. TrmA subfamily.

The enzyme catalyses uridine(54) in tRNA + S-adenosyl-L-methionine = 5-methyluridine(54) in tRNA + S-adenosyl-L-homocysteine + H(+). The catalysed reaction is uridine(341) in tmRNA + S-adenosyl-L-methionine = 5-methyluridine(341) in tmRNA + S-adenosyl-L-homocysteine + H(+). In terms of biological role, dual-specificity methyltransferase that catalyzes the formation of 5-methyluridine at position 54 (m5U54) in all tRNAs, and that of position 341 (m5U341) in tmRNA (transfer-mRNA). In Pseudomonas entomophila (strain L48), this protein is tRNA/tmRNA (uracil-C(5))-methyltransferase.